We begin with the raw amino-acid sequence, 354 residues long: Galactose-1-phosphate uridylyltransferase (354 aa).

The interval 36 to 72 (TVTTSEVRRDPLLGDSAPSRLAPQGRTYHPPADQCPL) is disordered. Residues Cys-70, Cys-73, and His-114 each contribute to the Zn(2+) site. Asn-154 contributes to the UDP-alpha-D-glucose binding site. Residue His-165 coordinates Zn(2+). Catalysis depends on His-167, which acts as the Tele-UMP-histidine intermediate. UDP-alpha-D-glucose-binding residues include Gln-169 and Gln-332.

It belongs to the galactose-1-phosphate uridylyltransferase type 1 family. Requires Zn(2+) as cofactor.

The catalysed reaction is alpha-D-galactose 1-phosphate + UDP-alpha-D-glucose = alpha-D-glucose 1-phosphate + UDP-alpha-D-galactose. It functions in the pathway carbohydrate metabolism; galactose metabolism. This chain is Galactose-1-phosphate uridylyltransferase (galT), found in Streptomyces lividans.